We begin with the raw amino-acid sequence, 299 residues long: F-actin-capping protein subunit alpha-3 (299 aa).

Phosphoserine is present on residues S2 and S290.

This sequence belongs to the F-actin-capping protein alpha subunit family. As to quaternary structure, component of the F-actin capping complex, composed of a heterodimer of an alpha and a beta subunit. Component of the WASH complex, composed of F-actin-capping protein subunit alpha (CAPZA1, CAPZA2 or CAPZA3), F-actin-capping protein subunit beta (CAPZB), WASHC1, WASHC2, WASHC3, WASHC4 and WASHC5. As to expression, exclusively expressed in the testis.

Its subcellular location is the cytoplasm. The protein resides in the cytoskeleton. Functionally, F-actin-capping proteins bind in a Ca(2+)-independent manner to the fast growing ends of actin filaments (barbed end) thereby blocking the exchange of subunits at these ends. Unlike other capping proteins (such as gelsolin and severin), these proteins do not sever actin filaments. May play a role in the morphogenesis of spermatid. The chain is F-actin-capping protein subunit alpha-3 (Capza3) from Rattus norvegicus (Rat).